We begin with the raw amino-acid sequence, 556 residues long: Formate--tetrahydrofolate ligase (556 aa).

An ATP-binding site is contributed by 65 to 72 (TPAGEGKT).

It belongs to the formate--tetrahydrofolate ligase family.

It carries out the reaction (6S)-5,6,7,8-tetrahydrofolate + formate + ATP = (6R)-10-formyltetrahydrofolate + ADP + phosphate. It functions in the pathway one-carbon metabolism; tetrahydrofolate interconversion. This is Formate--tetrahydrofolate ligase from Clostridium cylindrosporum.